The chain runs to 417 residues: Serine hydroxymethyltransferase (417 aa).

(6S)-5,6,7,8-tetrahydrofolate-binding positions include leucine 122 and 126–128; that span reads GHL. Lysine 230 bears the N6-(pyridoxal phosphate)lysine mark. A (6S)-5,6,7,8-tetrahydrofolate-binding site is contributed by 355–357; sequence SPF.

The protein belongs to the SHMT family. In terms of assembly, homodimer. Requires pyridoxal 5'-phosphate as cofactor.

It is found in the cytoplasm. It carries out the reaction (6R)-5,10-methylene-5,6,7,8-tetrahydrofolate + glycine + H2O = (6S)-5,6,7,8-tetrahydrofolate + L-serine. It functions in the pathway one-carbon metabolism; tetrahydrofolate interconversion. The protein operates within amino-acid biosynthesis; glycine biosynthesis; glycine from L-serine: step 1/1. Its function is as follows. Catalyzes the reversible interconversion of serine and glycine with tetrahydrofolate (THF) serving as the one-carbon carrier. This reaction serves as the major source of one-carbon groups required for the biosynthesis of purines, thymidylate, methionine, and other important biomolecules. Also exhibits THF-independent aldolase activity toward beta-hydroxyamino acids, producing glycine and aldehydes, via a retro-aldol mechanism. This chain is Serine hydroxymethyltransferase, found in Francisella tularensis subsp. mediasiatica (strain FSC147).